The following is a 311-amino-acid chain: Phosphoribosylamine--glycine ligase (311 aa).

Residues 1–191 enclose the ATP-grasp domain; it reads DPRVRKQYIQ…LVQVLLAACR (191 aa).

Belongs to the GARS family.

It is found in the plastid. Its subcellular location is the chloroplast. It catalyses the reaction 5-phospho-beta-D-ribosylamine + glycine + ATP = N(1)-(5-phospho-beta-D-ribosyl)glycinamide + ADP + phosphate + H(+). It participates in purine metabolism; IMP biosynthesis via de novo pathway; N(1)-(5-phospho-D-ribosyl)glycinamide from 5-phospho-alpha-D-ribose 1-diphosphate: step 2/2. This Vigna unguiculata (Cowpea) protein is Phosphoribosylamine--glycine ligase (PUR2).